The sequence spans 208 residues: Protein-L-isoaspartate O-methyltransferase (208 aa).

Ser59 is a catalytic residue.

The protein belongs to the methyltransferase superfamily. L-isoaspartyl/D-aspartyl protein methyltransferase family.

It is found in the cytoplasm. The enzyme catalyses [protein]-L-isoaspartate + S-adenosyl-L-methionine = [protein]-L-isoaspartate alpha-methyl ester + S-adenosyl-L-homocysteine. Catalyzes the methyl esterification of L-isoaspartyl residues in peptides and proteins that result from spontaneous decomposition of normal L-aspartyl and L-asparaginyl residues. It plays a role in the repair and/or degradation of damaged proteins. The sequence is that of Protein-L-isoaspartate O-methyltransferase from Yersinia pseudotuberculosis serotype O:1b (strain IP 31758).